A 399-amino-acid chain; its full sequence is Elongation factor Tu (399 aa).

The region spanning 10 to 204 (KPHVNIGTIG…AVDEAIPEPE (195 aa)) is the tr-type G domain. The tract at residues 19 to 26 (GHVDHGKT) is G1. 19–26 (GHVDHGKT) lines the GTP pocket. Position 26 (T26) interacts with Mg(2+). The G2 stretch occupies residues 60 to 64 (GITIN). Residues 81-84 (DCPG) are G3. GTP contacts are provided by residues 81 to 85 (DCPGH) and 136 to 139 (NKCD). The G4 stretch occupies residues 136–139 (NKCD). The tract at residues 174 to 176 (SGL) is G5.

Belongs to the TRAFAC class translation factor GTPase superfamily. Classic translation factor GTPase family. EF-Tu/EF-1A subfamily. Monomer.

The protein resides in the cytoplasm. The enzyme catalyses GTP + H2O = GDP + phosphate + H(+). Functionally, GTP hydrolase that promotes the GTP-dependent binding of aminoacyl-tRNA to the A-site of ribosomes during protein biosynthesis. In Parasynechococcus marenigrum (strain WH8102), this protein is Elongation factor Tu.